The primary structure comprises 179 residues: Small ribosomal subunit protein uS7 (179 aa).

Belongs to the universal ribosomal protein uS7 family. Part of the 30S ribosomal subunit. Contacts proteins S9 and S11. Cross-links to IF3 and the P and E site tRNAs.

One of the primary rRNA binding proteins, it binds directly to 16S rRNA where it nucleates assembly of the head domain of the 30S subunit. Is located at the subunit interface close to the decoding center, where it has been shown to contact mRNA. Has been shown to contact tRNA in both the P and E sites; it probably blocks exit of the E site tRNA. Its function is as follows. Protein S7 is also a translational repressor protein; it regulates the expression of the str operon members to different degrees by binding to its mRNA. The chain is Small ribosomal subunit protein uS7 (rpsG) from Escherichia coli (strain K12).